The chain runs to 425 residues: Serine--tRNA ligase (425 aa).

An L-serine-binding site is contributed by 230-232 (TAE). 261 to 263 (RSE) contributes to the ATP binding site. Glu284 provides a ligand contact to L-serine. Residue 348-351 (EISS) coordinates ATP. Ser383 lines the L-serine pocket.

This sequence belongs to the class-II aminoacyl-tRNA synthetase family. Type-1 seryl-tRNA synthetase subfamily. As to quaternary structure, homodimer. The tRNA molecule binds across the dimer.

The protein localises to the cytoplasm. It carries out the reaction tRNA(Ser) + L-serine + ATP = L-seryl-tRNA(Ser) + AMP + diphosphate + H(+). It catalyses the reaction tRNA(Sec) + L-serine + ATP = L-seryl-tRNA(Sec) + AMP + diphosphate + H(+). It functions in the pathway aminoacyl-tRNA biosynthesis; selenocysteinyl-tRNA(Sec) biosynthesis; L-seryl-tRNA(Sec) from L-serine and tRNA(Sec): step 1/1. In terms of biological role, catalyzes the attachment of serine to tRNA(Ser). Is also able to aminoacylate tRNA(Sec) with serine, to form the misacylated tRNA L-seryl-tRNA(Sec), which will be further converted into selenocysteinyl-tRNA(Sec). The polypeptide is Serine--tRNA ligase (Ligilactobacillus salivarius (strain UCC118) (Lactobacillus salivarius)).